The primary structure comprises 338 residues: Ketol-acid reductoisomerase (NADP(+)) (338 aa).

Residues 1–181 (MQVYYDKDCD…GGGRTGIIET (181 aa)) form the KARI N-terminal Rossmann domain. Residues 24-27 (YGSQ), Arg47, Ser50, Ser52, and 82-85 (DEFQ) contribute to the NADP(+) site. His107 is an active-site residue. NADP(+) is bound at residue Gly133. The region spanning 182–327 (TFKDETETDL…EKLRAMMPWI (146 aa)) is the KARI C-terminal knotted domain. Mg(2+) is bound by residues Asp190, Glu194, Glu226, and Glu230. Substrate is bound at residue Ser251.

This sequence belongs to the ketol-acid reductoisomerase family. The cofactor is Mg(2+).

The catalysed reaction is (2R)-2,3-dihydroxy-3-methylbutanoate + NADP(+) = (2S)-2-acetolactate + NADPH + H(+). The enzyme catalyses (2R,3R)-2,3-dihydroxy-3-methylpentanoate + NADP(+) = (S)-2-ethyl-2-hydroxy-3-oxobutanoate + NADPH + H(+). It participates in amino-acid biosynthesis; L-isoleucine biosynthesis; L-isoleucine from 2-oxobutanoate: step 2/4. Its pathway is amino-acid biosynthesis; L-valine biosynthesis; L-valine from pyruvate: step 2/4. Functionally, involved in the biosynthesis of branched-chain amino acids (BCAA). Catalyzes an alkyl-migration followed by a ketol-acid reduction of (S)-2-acetolactate (S2AL) to yield (R)-2,3-dihydroxy-isovalerate. In the isomerase reaction, S2AL is rearranged via a Mg-dependent methyl migration to produce 3-hydroxy-3-methyl-2-ketobutyrate (HMKB). In the reductase reaction, this 2-ketoacid undergoes a metal-dependent reduction by NADPH to yield (R)-2,3-dihydroxy-isovalerate. This chain is Ketol-acid reductoisomerase (NADP(+)), found in Teredinibacter turnerae (strain ATCC 39867 / T7901).